A 319-amino-acid polypeptide reads, in one-letter code: MTYARIQGVGSYIPQQILSNADLEKMVNTTDEWIMQRVGVRERHVIANSPDNTTTMAVDAAKRAIEMAGIDSAVIDMIIVGTATAEYYFPSTACLVQKHLNLREDIPAFDINAACAGFVYALSIADQYIRNGGAKHILVIGVDSLTKVVDWKDRSTCILFGDGAGAVILQAHKEPGILNTILHANGDYSDLITAKSGVWERESVPHLHMYGKEVFKLAVTKLGEIVDEIIEKSGLKQSDIDWLIPHQANLRIIEATAKRLGLPRERVILTIEQHGNTSAASIPLALDAAVRAGKIKRGDTLLLEAFGAGLAWGAALLKL.

Catalysis depends on residues Cys-115 and His-246. The ACP-binding stretch occupies residues 247–251 (QANLR). Asn-276 is a catalytic residue.

This sequence belongs to the thiolase-like superfamily. FabH family. In terms of assembly, homodimer.

The protein resides in the cytoplasm. The enzyme catalyses malonyl-[ACP] + acetyl-CoA + H(+) = 3-oxobutanoyl-[ACP] + CO2 + CoA. The protein operates within lipid metabolism; fatty acid biosynthesis. In terms of biological role, catalyzes the condensation reaction of fatty acid synthesis by the addition to an acyl acceptor of two carbons from malonyl-ACP. Catalyzes the first condensation reaction which initiates fatty acid synthesis and may therefore play a role in governing the total rate of fatty acid production. Possesses both acetoacetyl-ACP synthase and acetyl transacylase activities. Its substrate specificity determines the biosynthesis of branched-chain and/or straight-chain of fatty acids. This Coxiella burnetii (strain CbuK_Q154) (Coxiella burnetii (strain Q154)) protein is Beta-ketoacyl-[acyl-carrier-protein] synthase III.